A 148-amino-acid polypeptide reads, in one-letter code: Ribosome maturation factor RimP (148 aa).

It belongs to the RimP family.

The protein resides in the cytoplasm. Functionally, required for maturation of 30S ribosomal subunits. The chain is Ribosome maturation factor RimP from Treponema denticola (strain ATCC 35405 / DSM 14222 / CIP 103919 / JCM 8153 / KCTC 15104).